Reading from the N-terminus, the 94-residue chain is uncharacterized protein (94 aa).

Residues 13–33 (IVICLTTIISVTIFYILVSFF) traverse the membrane as a helical segment.

The protein localises to the membrane. This is an uncharacterized protein from Dictyostelium discoideum (Social amoeba).